The following is a 105-amino-acid chain: Resistin-like beta (105 aa).

An N-terminal signal peptide occupies residues 1–23; it reads MKPTLCFLFILVSLFPLIVPGNA. Cystine bridges form between C49/C102, C61/C101, C70/C87, C72/C89, and C76/C91.

Belongs to the resistin/FIZZ family. In terms of assembly, homodimer; disulfide-linked. Heterodimer with RETNLG. Strongly expressed in colon, and at lower levels in ileum. In colon, found throughout the crypt and surface epithelium and in goblet cells (at protein level). Specific to the gastrointestinal tract; not detected in other tissues tested.

The protein resides in the secreted. Its function is as follows. Probable hormone. This chain is Resistin-like beta (Retnlb), found in Mus musculus (Mouse).